The following is a 368-amino-acid chain: Seven-bladed beta-propeller protein MSMEG_5308 (368 aa).

As to quaternary structure, interacts with MmpL3 and TtfA.

Its subcellular location is the cell septum. The protein localises to the cell tip. Stabilizes the MmpL3/TtfA trehalose monomycolate (TMM) transport complex under stress conditions. The sequence is that of Seven-bladed beta-propeller protein MSMEG_5308 from Mycolicibacterium smegmatis (strain ATCC 700084 / mc(2)155) (Mycobacterium smegmatis).